Reading from the N-terminus, the 398-residue chain is Dihydrolipoyllysine-residue acetyltransferase component of acetoin cleaving system (398 aa).

The 76-residue stretch at 2 to 77 folds into the Lipoyl-binding domain; the sequence is AVKVVMPKLG…PPGTAICYIG (76 aa). N6-lipoyllysine is present on Lys-43. The Peripheral subunit-binding (PSBD) domain occupies 118 to 155; the sequence is KISPVARKIAEKAGLDLKQLKGTGPGGRIVKDDVTKAL. Active-site residues include His-371 and Asp-375.

Belongs to the 2-oxoacid dehydrogenase family. It depends on (R)-lipoate as a cofactor.

It carries out the reaction N(6)-[(R)-dihydrolipoyl]-L-lysyl-[protein] + acetyl-CoA = N(6)-[(R)-S(8)-acetyldihydrolipoyl]-L-lysyl-[protein] + CoA. It functions in the pathway ketone degradation; acetoin degradation. This Bacillus subtilis (strain 168) protein is Dihydrolipoyllysine-residue acetyltransferase component of acetoin cleaving system (acoC).